Reading from the N-terminus, the 307-residue chain is Membrane protein insertase YidC 1 (307 aa).

Residues 1–22 (MKSKKGLTLTITLGTLALFLSG) form the signal peptide. C23 carries the N-palmitoyl cysteine lipid modification. The S-diacylglycerol cysteine moiety is linked to residue C23. The next 5 membrane-spanning stretches (helical) occupy residues 59-79 (YGWA…PMMI), 136-156 (GIGC…YYAI), 177-197 (LILA…SMIG), 205-225 (TMRL…MSAP), and 226-246 (AGLG…TLII). A disordered region spans residues 260–307 (ELKKHPIKTPTPTQPKPINATESKPSHPRPQNNAGRGRNAGKQQRHHK).

Belongs to the OXA1/ALB3/YidC family. Type 2 subfamily.

The protein resides in the cell membrane. Functionally, required for the insertion and/or proper folding and/or complex formation of integral membrane proteins into the membrane. Involved in integration of membrane proteins that insert both dependently and independently of the Sec translocase complex, as well as at least some lipoproteins. This chain is Membrane protein insertase YidC 1, found in Lactiplantibacillus plantarum (strain ATCC BAA-793 / NCIMB 8826 / WCFS1) (Lactobacillus plantarum).